The primary structure comprises 1272 residues: MGRMKVIPEFSNYKIRTPIPIFKNELEIEKYIKGAISYIYSENTAKKLELKKRNDEIKEILNNKNDHEFVEKKIRAIVIQLGDTNLNDRCYLNYLNLYKQPIEFTHGAIMCEKNKYWVAYYASQSLNLDCLNFIIKHKDQFKGLDKDKRIKPIDPKKKISRDLLIGQPITVQCIKEDDLFKFLTVYFNQNGIEFSDSWFSSIVKLIFKGKVYSSDESEKLSTTTTTTTTPNEKYDKKILGEHTVFINKNRDGHLKFSTIPSLLLKISTLMNTGVINEYKQKNYFLETLYNSFPANKHFFNFNEETIQYITNLLLPHLHPLEFKRFNTIPWIIKSKEFIDFIIQHKDFYHLVPSIHKFTKKHENTNLFSASTINDGEEEDDDDDDNDVDGNDDDNNKEKVDDTSNKKDSIVKFKDDITIYLNVRQRFLQFSNFELANYFHTKLLECQKESENQINSNIQSINKEIESLSTSSTNTASSTRSKASSNSNQLKKKEDLEQQIIELQSLLKNKYFSNKEIYYLSFLRALKDCDISTIESIDKVVSIDSDQNNNKFQILFQKSFLENQPLKNGISPEFYDFKKVGPSSHPDVYAEGEYDEHDEYDDYQGKLDNHIDIKDSKFTKDENSRDQLFNYLKSSGFKSFTPSIFCYLLELLLLINTEKSNQQFQEIFKPISTTTTTSTTTTTTTTNLDNINEKIFKLSSDLLIHLVHIVDFKKFSIILDSVNLNRKLILEMIDNCKNKLSFQKRIYEFHDVRSKDYQYDINGHFSTNIKFSDAKDILKKLIDENLFPTSKDWIFIYHSLYISILQSTGVTLNNLLEVNKIYEEHEINYPSVLPNHSNYILDFNNNNNNNNNNNYYGLLNYQPYNNSGNINNESLKNVVSNFVLFYWFHLLDRKLSKLFVRSFSNSNFNEFSSSRLPCLKNSSICRIRSKRHSNTASQIFKSIYELQNFSLLEKYSTFKSYFPEERSYYYNNPSDPFYHPDGSKDFRVLIEEGEFQLAFNHLQLVATKTVSEFPPLTTSRLFQFITLEDVIELINLTTIKNFDESKDESEQQPLLKMWYGKDVKKCKDWILSCAIAKSRLDIVDLLLVKDIEYSTLPSTIEFLTGYKIIKSLFSPECDNQTLEYFLTFSNGIVLPSIKQYLIKDNIATQTKNDVFRVIRHGIGKFELLRTFIPSLGFSSCLIEKMVENRRFETLQYYMEIGLITNEDLTNQQKDQLKYENDLKHLDWVINLNHKKRVNRNQPTFTPNTNSTTATTATPLLQTRSGRTIIPIKK.

The short motif at 146-161 (KDKRIKPIDPKKKISR) is the Nuclear localization signal element. Disordered stretches follow at residues 369-403 (ASTINDGEEEDDDDDDNDVDGNDDDNNKEKVDDTS) and 468-490 (STSSTNTASSTRSKASSNSNQLK). The span at 374–392 (DGEEEDDDDDDNDVDGNDD) shows a compositional bias: acidic residues. The span at 393–403 (DNNKEKVDDTS) shows a compositional bias: basic and acidic residues. Residues 468–487 (STSSTNTASSTRSKASSNSN) are compositionally biased toward low complexity.

The protein localises to the nucleus. Its function is as follows. Functions autonomously, very early in the prespore pathway, to control prespore cell differentiation, maybe at the level of transcription. Also required for proper aggregation. The protein is Presporeless protein A (pslA) of Dictyostelium discoideum (Social amoeba).